Reading from the N-terminus, the 140-residue chain is RxLR effector protein CRE2 (140 aa).

The first 24 residues, 1 to 24 (MRWLIWTAVSTLVMLLAMTEVSAS), serve as a signal peptide directing secretion. Positions 56–72 (RSLRDKSSSLITESEER) match the RxLR-dEER motif.

It belongs to the RxLR effector family.

Its subcellular location is the secreted. The protein resides in the host cell. Effector that is involved in host plant infection. Contributes to virulence during the early infection stage, by inhibiting plant defense responses induced by both PAMP-triggered immunity (PTI) and effector-triggered immunity (ETI). The sequence is that of RxLR effector protein CRE2 from Phytophthora infestans (strain T30-4) (Potato late blight agent).